Reading from the N-terminus, the 310-residue chain is Olfactory receptor 5P80 (310 aa).

Residues 1–25 (MEPGNYTVVTEVILLGFTEDAIIRA) lie on the Extracellular side of the membrane. An N-linked (GlcNAc...) asparagine glycan is attached at N5. A helical transmembrane segment spans residues 26-46 (ILFIVFLIIYSVTLMGNASII). Residues 47-54 (MLIRRSPQ) lie on the Cytoplasmic side of the membrane. Residues 55 to 75 (LHTPMYLLLSHLAFVDIGYSS) traverse the membrane as a helical segment. The Extracellular portion of the chain corresponds to 76 to 99 (SVTPIMLKGFLRKETFILVSGCVA). A disulfide bridge links C97 with C189. A helical membrane pass occupies residues 100–120 (QLCSVVTFGSTECFLLAAMAY). Residues 121 to 133 (DRYVAICSPLLYA) are Cytoplasmic-facing. Residues 134–154 (TQMSSTVCILLVGASYLGGCV) traverse the membrane as a helical segment. At 155–196 (NAWTFTGCLLNLSFCRPNKVNHFFCDYSPLLKISCSHDFSSE) the chain is on the extracellular side. N165 carries N-linked (GlcNAc...) asparagine glycosylation. A helical membrane pass occupies residues 197 to 217 (VIPAISSGSIIVVTVFIIALS). Over 218-237 (YVYILVSILKMRSTEGRQKA) the chain is Cytoplasmic. A helical transmembrane segment spans residues 238–258 (FSTCTSHLTAVTLFYGTITFI). The Extracellular segment spans residues 259-271 (YVMPKSSYSTDQN). The chain crosses the membrane as a helical span at residues 272 to 292 (KVVSVFYTVVIPMLNPIIYSL). Over 293–310 (RNKDVKEAMKKLMANTHH) the chain is Cytoplasmic.

It belongs to the G-protein coupled receptor 1 family.

It localises to the cell membrane. Potential odorant receptor. The chain is Olfactory receptor 5P80 from Mus musculus (Mouse).